We begin with the raw amino-acid sequence, 118 residues long: MSAPAQPPTEGAEGAAPGGGPPGPPPNMTSNRRLQQTQAQVEEVVDIMRVNVDKVLERDQKLSELDDRADALQAGASQFESSAAKLKRKYWWKNCKMMIMLGAICAIIVVVIVIYFFA.

Low complexity predominate over residues M1–A15. The tract at residues M1–Q36 is disordered. Topologically, residues M1–K96 are cytoplasmic. The region spanning R33–K93 is the v-SNARE coiled-coil homology domain. The residue at position 63 (S63) is a Phosphoserine. The helical; Anchor for type IV membrane protein transmembrane segment at M97 to F116 threads the bilayer. The Vesicular segment spans residues F117–A118.

This sequence belongs to the synaptobrevin family. In terms of assembly, interacts with VAPA and VAPB.

It is found in the cytoplasmic vesicle. Its subcellular location is the secretory vesicle. It localises to the synaptic vesicle membrane. The protein localises to the synapse. The protein resides in the synaptosome. It is found in the cytoplasmic vesicle membrane. In terms of biological role, involved in the targeting and/or fusion of transport vesicles to their target membrane. The protein is Vesicle-associated membrane protein 1 (VAMP1) of Bos taurus (Bovine).